We begin with the raw amino-acid sequence, 223 residues long: Probable glutathione S-transferase (223 aa).

Residues 2-81 (AEVKLLGFWY…YIDETFEGPS (80 aa)) form the GST N-terminal domain. Glutathione-binding positions include S12, K39, V53, and 65–66 (ES). Residues 86 to 212 (DPYDRALARF…ELLAFFRARF (127 aa)) form the GST C-terminal domain.

The protein belongs to the GST superfamily. HSP26 family. Root tip-specific expression.

It catalyses the reaction RX + glutathione = an S-substituted glutathione + a halide anion + H(+). The chain is Probable glutathione S-transferase from Nicotiana tabacum (Common tobacco).